Here is a 435-residue protein sequence, read N- to C-terminus: MKGVGKPYENSHTSFLLVFFVLTLFSPAFSINTLSSIESLKISNSRTLVSPGNVLELGFFRTPSSSRWYLGMWYKKLSERTYVWVANRDNPLSCSIGTLKISNMNLVLLDHSNKSLWSTNHTRGNERSPVVAELLANGNFVLRDSNKNDRSGFLWQSFDYPTDTLLPEMKLGYDLRTGLNRFLTSWRSSDDPSSGDFSYKLQTRRLPEFYLFKDDFLVHRSGPWNGVGFSGMPEDQKLSYMVYNFTQNSEEVAYTFLMTNNSIYSRLTISSSGYFERLTWTPSSGMWNVFWSSPEDFQCDVYKICGAYSYCDVNTSPVCNCIQRFDPSNVQEWGLRAWSGGCRRRTRLSCSGDGFTRMKKMKLPETTMAIVDRSIGLKECEKRCLSDCNCTAFANADIRNGGTGCVIWTGQLEDIRTYFANGQDLYVRLAPADLV.

The N-terminal stretch at 1 to 30 is a signal peptide; it reads MKGVGKPYENSHTSFLLVFFVLTLFSPAFS. In terms of domain architecture, Bulb-type lectin spans 33–155; that stretch reads TLSSIESLKI…NKNDRSGFLW (123 aa). Residues asparagine 113, asparagine 120, asparagine 244, asparagine 260, and asparagine 389 are each glycosylated (N-linked (GlcNAc...) asparagine). The PAN domain maps to 350–430; sequence CSGDGFTRMK…NGQDLYVRLA (81 aa). Intrachain disulfides connect cysteine 380–cysteine 405 and cysteine 388–cysteine 390.

Stigma.

Functionally, involved in sporophytic self-incompatibility system (the inability of flowering plants to achieve self-fertilization). In Brassica oleracea var. alboglabra (Chinese kale), this protein is S-locus-specific glycoprotein BS29-2 (SLSG).